The chain runs to 500 residues: L-arabinose isomerase (500 aa).

Glu-306, Glu-333, His-350, and His-450 together coordinate Mn(2+).

This sequence belongs to the arabinose isomerase family. In terms of assembly, homohexamer. Requires Mn(2+) as cofactor.

It carries out the reaction beta-L-arabinopyranose = L-ribulose. Its pathway is carbohydrate degradation; L-arabinose degradation via L-ribulose; D-xylulose 5-phosphate from L-arabinose (bacterial route): step 1/3. Catalyzes the conversion of L-arabinose to L-ribulose. In Salmonella arizonae (strain ATCC BAA-731 / CDC346-86 / RSK2980), this protein is L-arabinose isomerase.